Reading from the N-terminus, the 206-residue chain is Large ribosomal subunit protein mL40 (206 aa).

A mitochondrion-targeting transit peptide spans 1 to 46; that stretch reads MATAAMLCAARALRPRSWIPGTCQAQVRHTHQRASLLSFWELIPMR. Residues 170–190 are disordered; that stretch reads PFEKEGPHYTPPVPNYQAPEG.

This sequence belongs to the mitochondrion-specific ribosomal protein mL40 family. As to quaternary structure, component of the mitochondrial ribosome large subunit (39S) which comprises a 16S rRNA and about 50 distinct proteins.

The protein resides in the mitochondrion. This is Large ribosomal subunit protein mL40 (Mrpl40) from Rattus norvegicus (Rat).